Reading from the N-terminus, the 79-residue chain is Acyl carrier protein (79 aa).

Residues A2–V77 form the Carrier domain. The residue at position 37 (S37) is an O-(pantetheine 4'-phosphoryl)serine.

The protein belongs to the acyl carrier protein (ACP) family. In terms of processing, 4'-phosphopantetheine is transferred from CoA to a specific serine of apo-ACP by AcpS. This modification is essential for activity because fatty acids are bound in thioester linkage to the sulfhydryl of the prosthetic group.

The protein resides in the cytoplasm. Its pathway is lipid metabolism; fatty acid biosynthesis. In terms of biological role, carrier of the growing fatty acid chain in fatty acid biosynthesis. This is Acyl carrier protein from Gemmatimonas aurantiaca (strain DSM 14586 / JCM 11422 / NBRC 100505 / T-27).